Here is a 360-residue protein sequence, read N- to C-terminus: G-protein coupled receptor 15 (360 aa).

Over 1–33 (MDPEETSVYLDYYYATSPNPDIRETHSHVPYTS) the chain is Extracellular. A helical membrane pass occupies residues 34–54 (VFLPVFYTAVFLTGVLGNLVL). Residues 55–69 (MGALHFKPGSRRLID) are Cytoplasmic-facing. Residues 70-90 (IFIINLAASDFIFLVTLPLWV) traverse the membrane as a helical segment. The Extracellular segment spans residues 91 to 120 (DKEASLGLWRTGSFLCKGSSYMISVNMHCS). Residues 121 to 141 (VFLLTCMSVDRYLAIVCPVVS) traverse the membrane as a helical segment. The Cytoplasmic segment spans residues 142 to 149 (RKFRRTDC). The helical transmembrane segment at 150-170 (AYVVCASIWFISCLLGLPTLL) threads the bilayer. Residues 171 to 192 (SRELTLIDDKPYCAEKKATPLK) lie on the Extracellular side of the membrane. A helical membrane pass occupies residues 193–213 (LIWSLVALIFTFFVPLLSIVT). The Cytoplasmic segment spans residues 214–239 (CYCCIARKLCAHYQQSGKHNKKLKKS). A helical membrane pass occupies residues 240–260 (IKIIFIVVAAFLVSWLPFNTS). The Extracellular segment spans residues 261–284 (KLLAIVSGLQQERYFPSAILQLGM). Residues 285–305 (EVSGPLAFANSCVNPFIYYIF) form a helical membrane-spanning segment. The Cytoplasmic portion of the chain corresponds to 306 to 360 (DSYIRRAIVHCLCPCLKNYDFGSSTETSDSHLTKALSTFIHAEDFTRRRKRSVSL). Ser-359 carries the post-translational modification Phosphoserine.

Belongs to the G-protein coupled receptor 1 family. In terms of assembly, interacts with adapter YWHAE; this interaction promotes ER-to-Golgi transport of GPR15. Post-translationally, phosphorylation is necessary for YWHAE binding and efficient surface expression. O-glycosylated. Sialylated O-glycans in the N-terminal tail inhibits binding of GPR15LG. In terms of processing, sulfation is required for efficient binding of GPR15LG.

The protein resides in the cell membrane. Its function is as follows. G protein-coupled receptor that plays an important role in immune homeostasis. Acts via its natural ligand GPR15LG, a chemokine-like polypeptide strongly expressed in gastrointestinal tissues. GPR15-GPR15LG signaling axis regulates intestinal homeostasis and inflammation through the migration of immune cells. Controls thereby the specific homing of T-cells, particularly FOXP3+ regulatory T-cells (Tregs), to the large intestine lamina propria. Also required for skin localization of thymus-derived dendritic epidermal T-cells. Plays an important role in mediating cytoprotective function as well as angiogenesis of thrombomodulin. Mechanistically, preferentially signals through the Gi/o pathway to inhibit adenylate cyclase activity and activate a phosphatidylinositol-calcium second messenger system that regulates the release of Ca(2+) ions from intracellular stores. The chain is G-protein coupled receptor 15 (GPR15) from Macaca nemestrina (Pig-tailed macaque).